A 342-amino-acid polypeptide reads, in one-letter code: Lipase B (342 aa).

The N-terminal stretch at 1-18 (MKLLSLTGVAGVLATCVA) is a signal peptide. Positions 19 to 25 (ATPLVKR) are excised as a propeptide. Cysteines 47 and 89 form a disulfide. A glycan (N-linked (GlcNAc...) asparagine) is linked at Asn99. Catalysis depends on residues Ser130, Asp212, and His249. 2 disulfides stabilise this stretch: Cys241–Cys283 and Cys318–Cys336.

It catalyses the reaction a triacylglycerol + H2O = a diacylglycerol + a fatty acid + H(+). Hydrolysis of triglycerides. Is very stereospecific both in hydrolysis and in organic synthesis and has a potentially important application in glucolipid synthesis. This chain is Lipase B, found in Pseudozyma antarctica (Yeast).